The sequence spans 210 residues: Large ribosomal subunit protein uL3 (210 aa).

This sequence belongs to the universal ribosomal protein uL3 family. In terms of assembly, part of the 50S ribosomal subunit. Forms a cluster with proteins L14 and L19.

Functionally, one of the primary rRNA binding proteins, it binds directly near the 3'-end of the 23S rRNA, where it nucleates assembly of the 50S subunit. This chain is Large ribosomal subunit protein uL3, found in Caldicellulosiruptor bescii (strain ATCC BAA-1888 / DSM 6725 / KCTC 15123 / Z-1320) (Anaerocellum thermophilum).